A 124-amino-acid chain; its full sequence is Fluoride-specific ion channel FluC 2 (124 aa).

Transmembrane regions (helical) follow at residues 36 to 56 (TFLI…YLAF), 66 to 86 (LFVM…SLDT), and 100 to 120 (LYAI…LALV). Na(+) contacts are provided by Gly-74 and Thr-77.

The protein belongs to the fluoride channel Fluc/FEX (TC 1.A.43) family.

It is found in the cell inner membrane. It catalyses the reaction fluoride(in) = fluoride(out). Its activity is regulated as follows. Na(+) is not transported, but it plays an essential structural role and its presence is essential for fluoride channel function. In terms of biological role, fluoride-specific ion channel. Important for reducing fluoride concentration in the cell, thus reducing its toxicity. The sequence is that of Fluoride-specific ion channel FluC 2 from Nitrobacter hamburgensis (strain DSM 10229 / NCIMB 13809 / X14).